Reading from the N-terminus, the 808-residue chain is MTSPKGKPSPKRSAPAPTTAALTPRTEERTEGATSSASASASSHISSSFDSPRDDTVVFTGYTAESKHNAHGYERLHDIILQDGDTGADSEDGRANEDNVILFPHAEELANAAAGINGDDDNGRVVRLGTIQHLEESDSSEDEPTLNRVGDIPLEWYKDEDHIGYDIEGKKLMKKERSALERLLEATDDPNAMRTIYDALHDEKKTLSNADLQLIFNLQRNRTTNPNYDMYSEVQEDTVVFDPLNHPLARSGGPSKRAFVPALHDMKVIAKMVRRLRKEEAERKLRPGKEEKEEEDQLLWDDGHVEMDTHTHFKYFNRVPKPKLPPPGTFESYRPPPEYLPSERAKQRQARLRAIDRKEHFLPQSFDALRHVPFYHHTIQDRYQRCLDLAFFPRAQRTRLVVDPDKLLPELPDPKDLRPYPEKLSFHYKGHTATVRSVSVSPNGQYLATGCDDHLVRVFEVQTGRLMKRYDMGAPVQQVEFCPSTSLNILAAAVEYSLVFIVPTFAAHTLVNDHTIRFLRAPGLSAGQREAAHALGAVDTLGGRAVTQTTLDADETAHEATADLHDIEEREKRAEFVDASAKERNAGIVVKIAMHAKVKKFCFHIKGDYLCALCPKDHVKYRQTIMLQLSKRKVFCPFRKFSEVVTDCRFHPREPIFFLATTNSVRCYNLMAHRLQRRFKASGGVTTCLSIHPEGDNFLVGDTTSHTSWFDMDFSDKPYKRMRSHRGVVNALAFHPKTNAYPLFATGASDGQVHVFHGMVYDDYNKNALVVPVKILKHQRPVYAVAWHPTLAWLFTSTEDGVVTAWTE.

A disordered region spans residues 1-56 (MTSPKGKPSPKRSAPAPTTAALTPRTEERTEGATSSASASASSHISSSFDSPRDDT). Composition is skewed to low complexity over residues 12–24 (RSAP…ALTP) and 33–50 (ATSS…SSFD). 5 WD repeats span residues 430-469 (GHTA…LMKR), 640-680 (KFSE…RRFK), 682-720 (SGGV…KPYK), 724-766 (SHRG…DYNK), and 777-808 (KHQR…AWTE).

Belongs to the WD repeat BOP1/ERB1 family.

It is found in the nucleus. The protein localises to the nucleolus. The protein resides in the nucleoplasm. Required for maturation of ribosomal RNAs and formation of the large ribosomal subunit. The polypeptide is Ribosome biogenesis protein BOP1 homolog (Leishmania infantum).